Reading from the N-terminus, the 248-residue chain is Probable transcriptional regulatory protein RHECIAT_CH0003714 (248 aa).

This sequence belongs to the TACO1 family.

It localises to the cytoplasm. The chain is Probable transcriptional regulatory protein RHECIAT_CH0003714 from Rhizobium etli (strain CIAT 652).